Reading from the N-terminus, the 438-residue chain is Xylose isomerase (438 aa).

Active-site residues include His-100 and Asp-103. Mg(2+)-binding residues include Glu-231, Glu-267, His-270, Asp-295, Asp-306, Asp-308, and Asp-338.

This sequence belongs to the xylose isomerase family. In terms of assembly, homotetramer. The cofactor is Mg(2+).

It is found in the cytoplasm. It carries out the reaction alpha-D-xylose = alpha-D-xylulofuranose. This Caldanaerobacter subterraneus subsp. yonseiensis (Thermoanaerobacter yonseiensis) protein is Xylose isomerase.